Here is a 203-residue protein sequence, read N- to C-terminus: MSGTLYIVSAPSGAGKTSLVKALLDAAPEVRVSVSHTTRGMRPGEVDGVNYHFTSREEFLAMLERNEFLEHAEVFGNLYGTSQRWVEKTLAEGLDLILEIDWQGAQQVRRLMPEAQSIFILPPSQEALRQRLTNRGQDSDEVIERRMREAVSEMSHYVEYDHLVINDDFAHALDDLKAIFRARQLRQDAQQQRHAELLGRLLA.

Positions 3–181 constitute a Guanylate kinase-like domain; that stretch reads GTLYIVSAPS…ALDDLKAIFR (179 aa). Residue 10–17 coordinates ATP; it reads APSGAGKT.

It belongs to the guanylate kinase family.

Its subcellular location is the cytoplasm. It carries out the reaction GMP + ATP = GDP + ADP. In terms of biological role, essential for recycling GMP and indirectly, cGMP. The chain is Guanylate kinase (gmk) from Pseudomonas aeruginosa (strain ATCC 15692 / DSM 22644 / CIP 104116 / JCM 14847 / LMG 12228 / 1C / PRS 101 / PAO1).